The primary structure comprises 104 residues: MIVTTTNTVEGKEIEAYLGIVAAEVILGANVVRDFLASITDIIGGRSGTYESKLAEGRELAIREMVNKATKLGANAVIGVDLDFETLRDGMMMCIATGTAVKVK.

This sequence belongs to the UPF0145 family.

This Geobacillus thermodenitrificans (strain NG80-2) protein is UPF0145 protein GTNG_1265.